The sequence spans 122 residues: UPF0382 membrane protein SH2409 (122 aa).

4 helical membrane passes run 3-23 (LFII…AFGA), 46-66 (MYHG…SINV), 69-89 (AGWL…ILAL), and 98-118 (ITPI…ISTF).

The protein belongs to the UPF0382 family.

Its subcellular location is the cell membrane. The protein is UPF0382 membrane protein SH2409 of Staphylococcus haemolyticus (strain JCSC1435).